Reading from the N-terminus, the 77-residue chain is Exodeoxyribonuclease 7 small subunit (77 aa).

Belongs to the XseB family. As to quaternary structure, heterooligomer composed of large and small subunits.

The protein localises to the cytoplasm. It catalyses the reaction Exonucleolytic cleavage in either 5'- to 3'- or 3'- to 5'-direction to yield nucleoside 5'-phosphates.. In terms of biological role, bidirectionally degrades single-stranded DNA into large acid-insoluble oligonucleotides, which are then degraded further into small acid-soluble oligonucleotides. The polypeptide is Exodeoxyribonuclease 7 small subunit (Trichlorobacter lovleyi (strain ATCC BAA-1151 / DSM 17278 / SZ) (Geobacter lovleyi)).